Here is a 247-residue protein sequence, read N- to C-terminus: Probable transcriptional regulatory protein LBF_0056 (247 aa).

Belongs to the TACO1 family.

The protein localises to the cytoplasm. The protein is Probable transcriptional regulatory protein LBF_0056 of Leptospira biflexa serovar Patoc (strain Patoc 1 / Ames).